Consider the following 487-residue polypeptide: MAKRSRNMESNSERSSRPKKKSKGDAKPEQPPYVQSAELDAVPQSEIDDFLKSNTIQISDPSIKETLRPITAFSYLPSDSNQLYGPLEHFSKPTPIQSVTWPYLFAGRDVIGVAETGSGKTLAFGVPCIRKVLEINASHSSFRISAVIITPTRELAMQIHDQLVKFTPNGVGLACIYGGASKDDQRRALKKASVIVATPGRLKDFHSDESLNLKKVKYLVLDEADRMLDKGFEQDIKDIVSAMPSSRKRQTVMFTATWPISVRKLATTFMKEPVTVTIGGDLSSDIRANTRIKQIVEVVKPENKESRLLSLLNQYQRGRNAMDKVLVFCLYKKEATRIERFIRSKGFKVAGIHGDMNQTERFNSLDAFKSGSVPVLVATDVAARGLDIPAVKLVLNVTFPLTVEDYVHRIGRTGRAGSDGLAITMFTENDKALSGGLVNILKGANQDIPEALLKFGTTVKKKQHDSYGAFFREADTMKTATKIKFDD.

The tract at residues 1–40 is disordered; it reads MAKRSRNMESNSERSSRPKKKSKGDAKPEQPPYVQSAELD. A Q motif motif is present at residues 71-98; it reads TAFSYLPSDSNQLYGPLEHFSKPTPIQS. The region spanning 101-276 is the Helicase ATP-binding domain; it reads WPYLFAGRDV…TTFMKEPVTV (176 aa). 114-121 provides a ligand contact to ATP; the sequence is AETGSGKT. The DEAD box motif lies at 222-225; the sequence is DEAD. In terms of domain architecture, Helicase C-terminal spans 291–456; the sequence is RIKQIVEVVK…DIPEALLKFG (166 aa).

Belongs to the DEAD box helicase family. DDX5/DBP2 subfamily.

The protein localises to the nucleus. The protein resides in the nucleolus. It catalyses the reaction ATP + H2O = ADP + phosphate + H(+). ATP-dependent RNA helicase required for 60S ribosomal subunit synthesis. Involved in efficient pre-rRNA processing, predominantly at site A3, which is necessary for the normal formation of 25S and 5.8S rRNAs. This is ATP-dependent RNA helicase DBP3 (DBP3) from Ajellomyces capsulatus (strain NAm1 / WU24) (Darling's disease fungus).